An 844-amino-acid polypeptide reads, in one-letter code: Protein translocase subunit SecA (844 aa).

Residues Gln89, 107-111 (GEGKT), and Asp497 each bind ATP. Residues Cys829, Cys831, Cys840, and His841 each contribute to the Zn(2+) site.

This sequence belongs to the SecA family. Monomer and homodimer. Part of the essential Sec protein translocation apparatus which comprises SecA, SecYEG and auxiliary proteins SecDF. Other proteins may also be involved. Zn(2+) is required as a cofactor.

The protein resides in the cell membrane. It localises to the cytoplasm. The enzyme catalyses ATP + H2O + cellular proteinSide 1 = ADP + phosphate + cellular proteinSide 2.. Functionally, part of the Sec protein translocase complex. Interacts with the SecYEG preprotein conducting channel. Has a central role in coupling the hydrolysis of ATP to the transfer of proteins into and across the cell membrane, serving as an ATP-driven molecular motor driving the stepwise translocation of polypeptide chains across the membrane. This is Protein translocase subunit SecA from Streptococcus suis (strain 98HAH33).